The sequence spans 596 residues: Cell adhesion molecule CEACAM20 (596 aa).

The first 30 residues, 1–30 (MGPADSWGHHWMGILLSASLCTVWSPPAAA), serve as a signal peptide directing secretion. Residues 31-450 (QLTLNANPLD…SSLSSGAIAG (420 aa)) lie on the Extracellular side of the membrane. Ig-like C2-type domains are found at residues 58 to 154 (PQIH…PIFL), 160 to 246 (PDPV…GTLK), 256 to 341 (PQVV…LELT), and 346 to 432 (PDQV…TSVL). Residues C90 and C138 are joined by a disulfide bond. 2 N-linked (GlcNAc...) asparagine glycosylation sites follow: N96 and N105. A disulfide bridge connects residues C276 and C324. N-linked (GlcNAc...) asparagine glycans are attached at residues N280, N306, N317, N368, and N415. C375 and C416 are disulfide-bonded. A helical membrane pass occupies residues 451 to 471 (IVIGILAVIAVASELGYFLCI). Topologically, residues 472–585 (RNARRPSRKT…SIYEELVNPE (114 aa)) are cytoplasmic. 2 disordered regions span residues 477–510 (PSRKTTEDPSHETSQPIPKEEHPTEPSSESLSPE) and 527–563 (QPPDLPEETYETKLPSASRRGNSFSPWKPPPKPLMPP). The segment covering 501 to 510 (EPSSESLSPE) has biased composition (low complexity). Positions 553–562 (WKPPPKPLMP) are enriched in pro residues. Phosphotyrosine occurs at positions 578 and 589.

It belongs to the immunoglobulin superfamily. CEA family. As to quaternary structure, interacts (via extracellular domain) with PTPRH (via extracellular domain); the interaction dephosphorylates CEACAM20. Interacts (phosphorylated form) with SYK (via SH2 domains); the interaction further enhances CEACAM20 phosphorylation. Phosphorylated on tyrosine residues by SYK, SRC and FYN in vitro.

The protein resides in the cell projection. The protein localises to the microvillus membrane. It is found in the apical cell membrane. Its function is as follows. Together with the tyrosine-protein kinase SYK, enhances production of the cytokine CXCL8/IL-8 via the NFKB pathway and may thus have a role in the intestinal immune response. In Homo sapiens (Human), this protein is Cell adhesion molecule CEACAM20.